The primary structure comprises 143 residues: Small ribosomal subunit protein eS12 (143 aa).

The protein belongs to the eukaryotic ribosomal protein eS12 family.

The protein is Small ribosomal subunit protein eS12 (RPS12) of Hordeum vulgare (Barley).